Here is a 248-residue protein sequence, read N- to C-terminus: Probable transcriptional regulatory protein PLES_43501 (248 aa).

This sequence belongs to the TACO1 family.

Its subcellular location is the cytoplasm. The polypeptide is Probable transcriptional regulatory protein PLES_43501 (Pseudomonas aeruginosa (strain LESB58)).